An 88-amino-acid polypeptide reads, in one-letter code: Small ribosomal subunit protein bS16 (88 aa).

This sequence belongs to the bacterial ribosomal protein bS16 family.

The protein is Small ribosomal subunit protein bS16 of Leptospira interrogans serogroup Icterohaemorrhagiae serovar Lai (strain 56601).